We begin with the raw amino-acid sequence, 1297 residues long: DNA-directed RNA polymerase subunit beta' (1297 aa).

Residues Cys-60, Cys-62, Cys-75, and Cys-78 each contribute to the Zn(2+) site. Asp-535, Asp-537, and Asp-539 together coordinate Mg(2+). Zn(2+) is bound by residues Cys-883, Cys-961, Cys-968, and Cys-971.

This sequence belongs to the RNA polymerase beta' chain family. As to quaternary structure, the RNAP catalytic core consists of 2 alpha, 1 beta, 1 beta' and 1 omega subunit. When a sigma factor is associated with the core the holoenzyme is formed, which can initiate transcription. Mg(2+) serves as cofactor. The cofactor is Zn(2+).

It catalyses the reaction RNA(n) + a ribonucleoside 5'-triphosphate = RNA(n+1) + diphosphate. Its function is as follows. DNA-dependent RNA polymerase catalyzes the transcription of DNA into RNA using the four ribonucleoside triphosphates as substrates. The protein is DNA-directed RNA polymerase subunit beta' of Salinispora arenicola (strain CNS-205).